The primary structure comprises 458 residues: Ribosomal protein uS12 methylthiotransferase RimO (458 aa).

In terms of domain architecture, MTTase N-terminal spans 6 to 116; it reads PKVGFVSLGC…VMEAVHAALP (111 aa). [4Fe-4S] cluster contacts are provided by cysteine 15, cysteine 51, cysteine 80, cysteine 147, cysteine 151, and cysteine 154. Residues 133 to 371 enclose the Radical SAM core domain; it reads LTPRHYAYLK…AKQAQISALR (239 aa). The region spanning 373-441 is the TRAM domain; the sequence is ESKIGSVQQC…EHDLFGDALP (69 aa).

The protein belongs to the methylthiotransferase family. RimO subfamily. [4Fe-4S] cluster serves as cofactor.

It is found in the cytoplasm. It catalyses the reaction L-aspartate(89)-[ribosomal protein uS12]-hydrogen + (sulfur carrier)-SH + AH2 + 2 S-adenosyl-L-methionine = 3-methylsulfanyl-L-aspartate(89)-[ribosomal protein uS12]-hydrogen + (sulfur carrier)-H + 5'-deoxyadenosine + L-methionine + A + S-adenosyl-L-homocysteine + 2 H(+). Its function is as follows. Catalyzes the methylthiolation of an aspartic acid residue of ribosomal protein uS12. The sequence is that of Ribosomal protein uS12 methylthiotransferase RimO from Xanthomonas euvesicatoria pv. vesicatoria (strain 85-10) (Xanthomonas campestris pv. vesicatoria).